Consider the following 294-residue polypeptide: 4-hydroxybenzoate octaprenyltransferase (294 aa).

8 helical membrane-spanning segments follow: residues 20–42 (LLRI…ALWL), 98–118 (WEAV…VVLF), 120–140 (NTLT…YPFM), 145–165 (HLPQ…AWAA), 175–195 (WLLF…YAMV), 218–238 (AIIA…GQRA), 242–262 (SFYY…QYLA), and 274–294 (FLNN…DLAF).

The protein belongs to the UbiA prenyltransferase family. Mg(2+) serves as cofactor.

Its subcellular location is the cell inner membrane. It catalyses the reaction all-trans-octaprenyl diphosphate + 4-hydroxybenzoate = 4-hydroxy-3-(all-trans-octaprenyl)benzoate + diphosphate. The protein operates within cofactor biosynthesis; ubiquinone biosynthesis. In terms of biological role, catalyzes the prenylation of para-hydroxybenzoate (PHB) with an all-trans polyprenyl group. Mediates the second step in the final reaction sequence of ubiquinone-8 (UQ-8) biosynthesis, which is the condensation of the polyisoprenoid side chain with PHB, generating the first membrane-bound Q intermediate 3-octaprenyl-4-hydroxybenzoate. The sequence is that of 4-hydroxybenzoate octaprenyltransferase from Marinobacter nauticus (strain ATCC 700491 / DSM 11845 / VT8) (Marinobacter aquaeolei).